The chain runs to 136 residues: MKIALIAHDRMKEQIVQLAMAYESILAKHDLYATGTTGSRIMEATSLSLTRFLSGPLGGDQQIGAMIARNEMDLIIFLRDPLTSQPHEPDIIALLRLCDVHKIPFATNLGSAEIMLKALELGQLDWREVVREENEA.

One can recognise an MGS-like domain in the interval 1-136 (MKIALIAHDR…REVVREENEA (136 aa)). Residues histidine 8, lysine 12, 34–37 (TGTT), and 54–55 (SG) each bind substrate. The active-site Proton donor/acceptor is the aspartate 60. Histidine 87 is a binding site for substrate.

Belongs to the methylglyoxal synthase family.

The enzyme catalyses dihydroxyacetone phosphate = methylglyoxal + phosphate. Its function is as follows. Catalyzes the formation of methylglyoxal from dihydroxyacetone phosphate. The sequence is that of Methylglyoxal synthase from Brevibacillus brevis (strain 47 / JCM 6285 / NBRC 100599).